Consider the following 156-residue polypeptide: Arginine repressor (156 aa).

The protein belongs to the ArgR family.

It localises to the cytoplasm. Its pathway is amino-acid biosynthesis; L-arginine biosynthesis [regulation]. Its function is as follows. Regulates arginine biosynthesis genes. This Tolumonas auensis (strain DSM 9187 / NBRC 110442 / TA 4) protein is Arginine repressor.